The following is a 421-amino-acid chain: eIF5-mimic protein 1 (421 aa).

Residues 1–24 (MNTGKQQKPVLTGQRFKTRKRDEK) form a disordered region. The W2 domain occupies 250–417 (TQQTLGTRKE…QNAEEESESE (168 aa)).

The protein belongs to the BZW family.

Its subcellular location is the cytoplasm. Its function is as follows. Translation initiation regulator which may repress non-AUG initiated translation and repeat-associated non-AUG (RAN) initiated translation by acting as a competitive inhibitor of eukaryotic translation initiation factor 5 (EIF5) function. This chain is eIF5-mimic protein 1 (bzw2), found in Danio rerio (Zebrafish).